The primary structure comprises 835 residues: Ribosome-releasing factor 2, mitochondrial (835 aa).

Residues 1 to 50 (MPWCNTRLRTCGASPKIFLRRVRCPVLLHNWTIGRVSSVSKMILRFLRSY) constitute a mitochondrion transit peptide. One can recognise a tr-type G domain in the interval 57–343 (TRVRNIGIIA…AVVDYLPSPA (287 aa)). Residues 66–73 (AHIDAGKT), 131–135 (DTPGH), and 183–186 (NKMD) contribute to the GTP site.

This sequence belongs to the TRAFAC class translation factor GTPase superfamily. Classic translation factor GTPase family. EF-G/EF-2 subfamily.

The protein localises to the mitochondrion. In terms of biological role, mitochondrial GTPase that mediates the disassembly of ribosomes from messenger RNA at the termination of mitochondrial protein biosynthesis. Not involved in the GTP-dependent ribosomal translocation step during translation elongation. In Eremothecium gossypii (strain ATCC 10895 / CBS 109.51 / FGSC 9923 / NRRL Y-1056) (Yeast), this protein is Ribosome-releasing factor 2, mitochondrial.